The sequence spans 224 residues: Deoxyribose-phosphate aldolase (224 aa).

Catalysis depends on Asp91, which acts as the Proton donor/acceptor. Lys152 (schiff-base intermediate with acetaldehyde) is an active-site residue. The active-site Proton donor/acceptor is Lys181.

Belongs to the DeoC/FbaB aldolase family. DeoC type 1 subfamily.

The protein localises to the cytoplasm. The enzyme catalyses 2-deoxy-D-ribose 5-phosphate = D-glyceraldehyde 3-phosphate + acetaldehyde. Its pathway is carbohydrate degradation; 2-deoxy-D-ribose 1-phosphate degradation; D-glyceraldehyde 3-phosphate and acetaldehyde from 2-deoxy-alpha-D-ribose 1-phosphate: step 2/2. Catalyzes a reversible aldol reaction between acetaldehyde and D-glyceraldehyde 3-phosphate to generate 2-deoxy-D-ribose 5-phosphate. The polypeptide is Deoxyribose-phosphate aldolase (Mycoplasma pneumoniae (strain ATCC 29342 / M129 / Subtype 1) (Mycoplasmoides pneumoniae)).